We begin with the raw amino-acid sequence, 424 residues long: Probable carboxypeptidase AN5749 (424 aa).

Residues 1–17 (MNLSILAALALVSFSTA) form the signal peptide. Asn-58 carries an N-linked (GlcNAc...) asparagine glycan. Asp-139 is a Zn(2+) binding site. Glu-171 functions as the Proton acceptor in the catalytic mechanism. Glu-172 contacts Zn(2+). Residues Asn-184 and Asn-323 are each glycosylated (N-linked (GlcNAc...) asparagine).

It belongs to the peptidase M20A family. The cofactor is Zn(2+).

Its subcellular location is the secreted. This Emericella nidulans (strain FGSC A4 / ATCC 38163 / CBS 112.46 / NRRL 194 / M139) (Aspergillus nidulans) protein is Probable carboxypeptidase AN5749.